Here is a 111-residue protein sequence, read N- to C-terminus: Protein YibV (111 aa).

The chain is Protein YibV (yibV) from Escherichia coli O157:H7.